The chain runs to 295 residues: Large ribosomal subunit protein uL2 (295 aa).

The tract at residues Trp243–Ser295 is disordered. Residues Asp256 to Val287 are compositionally biased toward basic and acidic residues.

This sequence belongs to the universal ribosomal protein uL2 family. In terms of assembly, part of the 50S ribosomal subunit. Forms a bridge to the 30S subunit in the 70S ribosome.

Its function is as follows. One of the primary rRNA binding proteins. Required for association of the 30S and 50S subunits to form the 70S ribosome, for tRNA binding and peptide bond formation. It has been suggested to have peptidyltransferase activity; this is somewhat controversial. Makes several contacts with the 16S rRNA in the 70S ribosome. The polypeptide is Large ribosomal subunit protein uL2 (Aquifex pyrophilus).